Reading from the N-terminus, the 310-residue chain is Lipoyl synthase (310 aa).

[4Fe-4S] cluster contacts are provided by cysteine 54, cysteine 59, cysteine 65, cysteine 80, cysteine 84, cysteine 87, and serine 295. Residues 66–284 (FASGTATFLI…LFGEDNLGFM (219 aa)) form the Radical SAM core domain.

Belongs to the radical SAM superfamily. Lipoyl synthase family. The cofactor is [4Fe-4S] cluster.

The protein resides in the cytoplasm. The enzyme catalyses [[Fe-S] cluster scaffold protein carrying a second [4Fe-4S](2+) cluster] + N(6)-octanoyl-L-lysyl-[protein] + 2 oxidized [2Fe-2S]-[ferredoxin] + 2 S-adenosyl-L-methionine + 4 H(+) = [[Fe-S] cluster scaffold protein] + N(6)-[(R)-dihydrolipoyl]-L-lysyl-[protein] + 4 Fe(3+) + 2 hydrogen sulfide + 2 5'-deoxyadenosine + 2 L-methionine + 2 reduced [2Fe-2S]-[ferredoxin]. Its pathway is protein modification; protein lipoylation via endogenous pathway; protein N(6)-(lipoyl)lysine from octanoyl-[acyl-carrier-protein]: step 2/2. Its function is as follows. Catalyzes the radical-mediated insertion of two sulfur atoms into the C-6 and C-8 positions of the octanoyl moiety bound to the lipoyl domains of lipoate-dependent enzymes, thereby converting the octanoylated domains into lipoylated derivatives. The chain is Lipoyl synthase from Prochlorococcus marinus (strain MIT 9215).